The following is a 155-amino-acid chain: Ribosomal RNA large subunit methyltransferase H (155 aa).

S-adenosyl-L-methionine is bound by residues Leu-72, Gly-103, and 122-127 (FGRMVW).

The protein belongs to the RNA methyltransferase RlmH family. As to quaternary structure, homodimer.

It localises to the cytoplasm. The catalysed reaction is pseudouridine(1915) in 23S rRNA + S-adenosyl-L-methionine = N(3)-methylpseudouridine(1915) in 23S rRNA + S-adenosyl-L-homocysteine + H(+). Specifically methylates the pseudouridine at position 1915 (m3Psi1915) in 23S rRNA. In Paracoccus denitrificans (strain Pd 1222), this protein is Ribosomal RNA large subunit methyltransferase H.